A 100-amino-acid chain; its full sequence is Protein translation factor SUI1 homolog (100 aa).

Belongs to the SUI1 family.

The protein is Protein translation factor SUI1 homolog of Sulfurisphaera tokodaii (strain DSM 16993 / JCM 10545 / NBRC 100140 / 7) (Sulfolobus tokodaii).